Reading from the N-terminus, the 443-residue chain is Xaa-Pro dipeptidase (443 aa).

5 residues coordinate Mn(2+): aspartate 246, aspartate 257, histidine 339, glutamate 384, and glutamate 423.

The protein belongs to the peptidase M24B family. Bacterial-type prolidase subfamily. The cofactor is Mn(2+).

It catalyses the reaction Xaa-L-Pro dipeptide + H2O = an L-alpha-amino acid + L-proline. In terms of biological role, splits dipeptides with a prolyl residue in the C-terminal position. The chain is Xaa-Pro dipeptidase from Pectobacterium atrosepticum (strain SCRI 1043 / ATCC BAA-672) (Erwinia carotovora subsp. atroseptica).